Here is a 98-residue protein sequence, read N- to C-terminus: Co-chaperonin GroES (98 aa).

It belongs to the GroES chaperonin family. In terms of assembly, heptamer of 7 subunits arranged in a ring. Interacts with the chaperonin GroEL.

The protein localises to the cytoplasm. Its function is as follows. Together with the chaperonin GroEL, plays an essential role in assisting protein folding. The GroEL-GroES system forms a nano-cage that allows encapsulation of the non-native substrate proteins and provides a physical environment optimized to promote and accelerate protein folding. GroES binds to the apical surface of the GroEL ring, thereby capping the opening of the GroEL channel. This chain is Co-chaperonin GroES, found in Bartonella tribocorum (strain CIP 105476 / IBS 506).